A 326-amino-acid chain; its full sequence is Pantothenate kinase (326 aa).

Residue 104–111 (GSVAVGKS) coordinates ATP.

The protein belongs to the prokaryotic pantothenate kinase family.

The protein localises to the cytoplasm. The catalysed reaction is (R)-pantothenate + ATP = (R)-4'-phosphopantothenate + ADP + H(+). It functions in the pathway cofactor biosynthesis; coenzyme A biosynthesis; CoA from (R)-pantothenate: step 1/5. This Parvibaculum lavamentivorans (strain DS-1 / DSM 13023 / NCIMB 13966) protein is Pantothenate kinase.